A 685-amino-acid chain; its full sequence is Tripartite terminase subunit 1 (685 aa).

The C3H1-type zinc-finger motif lies at 173-201; the sequence is CWRCVGELMVLPNHGNPSTAEGTHVSCNH. 2 disordered regions span residues 231 to 254 and 394 to 423; these read EEKARPGGPEEGAVPGPGRPEAEG and LGRGEEEASRESPEVPRPAGAREPGPSGAL. Residues 395-407 show a composition bias toward basic and acidic residues; it reads GRGEEEASRESPE. An ATP-binding site is contributed by 619 to 626; the sequence is YNKTWGRS.

The protein belongs to the herpesviridae TRM1 protein family. In terms of assembly, associates with TRM2 and TRM3 to form the tripartite terminase complex. Interacts with portal protein.

It is found in the host nucleus. Component of the molecular motor that translocates viral genomic DNA in empty capsid during DNA packaging. Forms a tripartite terminase complex together with TRM2 and TRM3 in the host cytoplasm. Once the complex reaches the host nucleus, it interacts with the capsid portal vertex. This portal forms a ring in which genomic DNA is translocated into the capsid. TRM1 carries an endonuclease activity that plays an important role for the cleavage of concatemeric viral DNA into unit length genomes. The protein is Tripartite terminase subunit 1 of Epstein-Barr virus (strain B95-8) (HHV-4).